We begin with the raw amino-acid sequence, 232 residues long: Multiple organellar RNA editing factor 6, mitochondrial (232 aa).

The transit peptide at 1-67 (MAKTLSRSTA…TIRTRMDRSG (67 aa)) directs the protein to the mitochondrion. A disordered region spans residues 208–232 (TNQRGSDKPKYHDRIRNVRRRENMR). Residues 212–232 (GSDKPKYHDRIRNVRRRENMR) are compositionally biased toward basic and acidic residues.

The protein belongs to the MORF family. In terms of assembly, heterodimers with MORF8/RIP1, MORF3/RIP3, MORF6/RIP6, MORF7/RIP7 and MORF9/RIP9.

It localises to the mitochondrion. Its function is as follows. Involved in organellar RNA editing. Required for the processing of few RNA editing sites in mitochondria. The sequence is that of Multiple organellar RNA editing factor 6, mitochondrial from Arabidopsis thaliana (Mouse-ear cress).